Consider the following 257-residue polypeptide: NAD-capped RNA hydrolase NudC (257 aa).

Residues K25 and R69 each contribute to the substrate site. 2 residues coordinate Zn(2+): C98 and C101. E111 is a binding site for substrate. 2 residues coordinate Zn(2+): C116 and C119. Y124 is a substrate binding site. Residues 125-248 (PQIAPCIIVA…TVARRLIEDT (124 aa)) enclose the Nudix hydrolase domain. Residues A158, E174, and E178 each coordinate a divalent metal cation. A Nudix box motif is present at residues 159–180 (GFVEVGETLEQAVAREVMEESG). 192–199 (QPWPFPQS) is a substrate binding site. E219 is an a divalent metal cation binding site. A substrate-binding site is contributed by A241.

Belongs to the Nudix hydrolase family. NudC subfamily. Homodimer. The cofactor is Mg(2+). Mn(2+) serves as cofactor. Zn(2+) is required as a cofactor.

It catalyses the reaction a 5'-end NAD(+)-phospho-ribonucleoside in mRNA + H2O = a 5'-end phospho-adenosine-phospho-ribonucleoside in mRNA + beta-nicotinamide D-ribonucleotide + 2 H(+). The enzyme catalyses NAD(+) + H2O = beta-nicotinamide D-ribonucleotide + AMP + 2 H(+). It carries out the reaction NADH + H2O = reduced beta-nicotinamide D-ribonucleotide + AMP + 2 H(+). Its function is as follows. mRNA decapping enzyme that specifically removes the nicotinamide adenine dinucleotide (NAD) cap from a subset of mRNAs by hydrolyzing the diphosphate linkage to produce nicotinamide mononucleotide (NMN) and 5' monophosphate mRNA. The NAD-cap is present at the 5'-end of some mRNAs and stabilizes RNA against 5'-processing. Has preference for mRNAs with a 5'-end purine. Catalyzes the hydrolysis of a broad range of dinucleotide pyrophosphates. The sequence is that of NAD-capped RNA hydrolase NudC from Escherichia coli (strain 55989 / EAEC).